The following is a 798-amino-acid chain: Integrin beta-1-A (798 aa).

The first 21 residues, 1-21 (MAHYPVFTVGLLTCLVLCINA), serve as a signal peptide directing secretion. Over 22–727 (QQGGTECLKA…VKEPECPSGP (706 aa)) the chain is Extracellular. The PSI domain maps to 27–77 (ECLKANAKSCGECIQAGPNCGWCTKVDFLQEGEPTSARCDDLAALKSKGCP). Disulfide bonds link Cys-28-Cys-46, Cys-36-Cys-464, Cys-39-Cys-65, Cys-49-Cys-76, Cys-206-Cys-212, Cys-260-Cys-300, Cys-400-Cys-414, Cys-434-Cys-462, Cys-466-Cys-486, Cys-477-Cys-489, Cys-491-Cys-500, Cys-502-Cys-533, Cys-516-Cys-531, Cys-525-Cys-536, Cys-538-Cys-553, Cys-555-Cys-576, Cys-560-Cys-574, Cys-568-Cys-579, Cys-581-Cys-590, Cys-592-Cys-615, Cys-599-Cys-613, Cys-607-Cys-618, Cys-620-Cys-630, Cys-633-Cys-636, Cys-640-Cys-691, Cys-646-Cys-665, Cys-649-Cys-661, and Cys-699-Cys-723. Positions 76–106 (CPEDDIQNPRGRKQKLKDIPITSKGKGERMD) are disordered. N-linked (GlcNAc...) asparagine glycans are attached at residues Asn-109 and Asn-131. The VWFA domain occupies 139–377 (DYPIDLYYLM…QLIIDSYNSL (239 aa)). Mg(2+) is bound by residues Ser-151 and Ser-153. Ca(2+)-binding residues include Ser-153, Asp-156, Asp-157, and Glu-188. N-linked (GlcNAc...) asparagine glycosylation is found at Asn-211 and Asn-223. Asn-243, Asp-245, Pro-247, and Glu-248 together coordinate Ca(2+). Glu-248 contacts Mg(2+). 2 N-linked (GlcNAc...) asparagine glycosylation sites follow: Asn-268 and Asn-362. Asn-416 carries an N-linked (GlcNAc...) asparagine glycan. 4 consecutive I-EGF domains span residues 466-501 (CQDKGTPNSPECHFGNGTFECGACRCNDGRIGKECE), 502-554 (CSTD…KYCE), 555-591 (CDNFNCDRSNGLICGGKGICKCRVCECFPNYSGSACD), and 592-631 (CSEDTSTCMAKNGQICNGRGICDCGRCKCTDPKFQGPTCE). The N-linked (GlcNAc...) asparagine glycan is linked to Asn-481. Asn-520 carries an N-linked (GlcNAc...) asparagine glycan. N-linked (GlcNAc...) asparagine glycosylation occurs at Asn-584. N-linked (GlcNAc...) asparagine glycosylation is present at Asn-669. The helical transmembrane segment at 728 to 751 (DIIPIVAGVVAGIVLIGLALLLIW) threads the bilayer. Residues 752-798 (KLLMIIHDRREFAKFEKEKMNAKWDTGENPIYKSAVTTVVNPKYEGK) are Cytoplasmic-facing. Tyr-783 carries the post-translational modification Phosphotyrosine.

This sequence belongs to the integrin beta chain family. In terms of assembly, heterodimer of an alpha and a beta subunit.

The protein localises to the cell membrane. The protein resides in the cell projection. It is found in the invadopodium membrane. Its subcellular location is the ruffle membrane. It localises to the melanosome. The protein localises to the cleavage furrow. The protein resides in the lamellipodium. It is found in the ruffle. In terms of biological role, beta integrins associate with alpha subunits to form receptor complexes that recognize the sequence R-G-D in a wide array of ligands. May be involved in osteoblast compaction. May play role in myoblast differentiation and fusion during skeletal myogenesis. The protein is Integrin beta-1-A (itgb1-a) of Xenopus laevis (African clawed frog).